A 120-amino-acid polypeptide reads, in one-letter code: Large ribosomal subunit protein bL19 (120 aa).

This sequence belongs to the bacterial ribosomal protein bL19 family.

Its function is as follows. This protein is located at the 30S-50S ribosomal subunit interface and may play a role in the structure and function of the aminoacyl-tRNA binding site. In Thermosynechococcus vestitus (strain NIES-2133 / IAM M-273 / BP-1), this protein is Large ribosomal subunit protein bL19.